The primary structure comprises 89 residues: Small ribosomal subunit protein uS17 (89 aa).

The protein belongs to the universal ribosomal protein uS17 family. As to quaternary structure, part of the 30S ribosomal subunit.

Its function is as follows. One of the primary rRNA binding proteins, it binds specifically to the 5'-end of 16S ribosomal RNA. This chain is Small ribosomal subunit protein uS17, found in Acidovorax ebreus (strain TPSY) (Diaphorobacter sp. (strain TPSY)).